The following is a 2099-amino-acid chain: Dedicator of cytokinesis protein 8 (2099 aa).

Phosphoserine occurs at positions 20, 139, and 451. The 170-residue stretch at 560-729 folds into the C2 DOCK-type domain; that stretch reads RNLLYVYPQR…GVFNIEVQAV (170 aa). Residues serine 904, serine 936, serine 1145, and serine 1243 each carry the phosphoserine modification. Residues 1632–2066 enclose the DOCKER domain; the sequence is KSYQASPDLR…LRPMIERKIP (435 aa). Serine 2087 is modified (phosphoserine).

The protein belongs to the DOCK family. In terms of assembly, interacts (via DOCKER domain) with GTPase CDC42; the interaction activates CDC42 by exchanging GDP for GTP. The unphosphorylated form interacts (via DOCKER domain) with LRCH1 (via LRR repeats); the interaction prevents the association between DOCK8 and CDC42. Interacts with CCDC88B. In response to chemokine CXCL12/SDF-1-alpha stimulation, phosphorylated by PRKCA/PKC-alpha which promotes DOCK8 dissociation from LRCH1. As to expression, expressed in peripheral blood mononuclear cells (PBMCs).

It is found in the cytoplasm. The protein localises to the cell membrane. Its subcellular location is the cell projection. The protein resides in the lamellipodium membrane. Guanine nucleotide exchange factor (GEF) which specifically activates small GTPase CDC42 by exchanging bound GDP for free GTP. During immune responses, required for interstitial dendritic cell (DC) migration by locally activating CDC42 at the leading edge membrane of DC. Required for CD4(+) T-cell migration in response to chemokine stimulation by promoting CDC42 activation at T cell leading edge membrane. Is involved in NK cell cytotoxicity by controlling polarization of microtubule-organizing center (MTOC), and possibly regulating CCDC88B-mediated lytic granule transport to MTOC during cell killing. This Homo sapiens (Human) protein is Dedicator of cytokinesis protein 8 (DOCK8).